A 55-amino-acid polypeptide reads, in one-letter code: Large ribosomal subunit protein bL33C (55 aa).

This sequence belongs to the bacterial ribosomal protein bL33 family.

This chain is Large ribosomal subunit protein bL33C, found in Kineococcus radiotolerans (strain ATCC BAA-149 / DSM 14245 / SRS30216).